We begin with the raw amino-acid sequence, 331 residues long: Large ribosomal subunit protein uL3 (331 aa).

The protein belongs to the universal ribosomal protein uL3 family. In terms of assembly, part of the 50S ribosomal subunit. Forms a cluster with proteins L14 and L24e.

In terms of biological role, one of the primary rRNA binding proteins, it binds directly near the 3'-end of the 23S rRNA, where it nucleates assembly of the 50S subunit. The protein is Large ribosomal subunit protein uL3 of Thermoplasma volcanium (strain ATCC 51530 / DSM 4299 / JCM 9571 / NBRC 15438 / GSS1).